A 149-amino-acid chain; its full sequence is Large ribosomal subunit protein bL9 (149 aa).

The protein belongs to the bacterial ribosomal protein bL9 family.

In terms of biological role, binds to the 23S rRNA. This is Large ribosomal subunit protein bL9 from Campylobacter curvus (strain 525.92).